The following is a 455-amino-acid chain: 3-isopropylmalate dehydratase large subunit (455 aa).

Residues cysteine 337, cysteine 397, and cysteine 400 each contribute to the [4Fe-4S] cluster site.

Belongs to the aconitase/IPM isomerase family. LeuC type 1 subfamily. In terms of assembly, heterodimer of LeuC and LeuD. The cofactor is [4Fe-4S] cluster.

The catalysed reaction is (2R,3S)-3-isopropylmalate = (2S)-2-isopropylmalate. The protein operates within amino-acid biosynthesis; L-leucine biosynthesis; L-leucine from 3-methyl-2-oxobutanoate: step 2/4. Catalyzes the isomerization between 2-isopropylmalate and 3-isopropylmalate, via the formation of 2-isopropylmaleate. The chain is 3-isopropylmalate dehydratase large subunit from Leuconostoc citreum (strain KM20).